An 802-amino-acid chain; its full sequence is Phenylalanine--tRNA ligase beta subunit (802 aa).

One can recognise a tRNA-binding domain in the interval 40–149 (RPELDFVKIV…EGAEIGKTIR (110 aa)). The 78-residue stretch at 407–484 (HKEVRIHTDI…RTRGYDTIQV (78 aa)) folds into the B5 domain. Residues Asp462, Asp468, Glu471, and Glu472 each coordinate Mg(2+). Positions 710–802 (SQFPEAEIDI…LAGKNGFVLR (93 aa)) constitute an FDX-ACB domain.

This sequence belongs to the phenylalanyl-tRNA synthetase beta subunit family. Type 1 subfamily. In terms of assembly, tetramer of two alpha and two beta subunits. Mg(2+) is required as a cofactor.

Its subcellular location is the cytoplasm. It carries out the reaction tRNA(Phe) + L-phenylalanine + ATP = L-phenylalanyl-tRNA(Phe) + AMP + diphosphate + H(+). The polypeptide is Phenylalanine--tRNA ligase beta subunit (Leptospira borgpetersenii serovar Hardjo-bovis (strain L550)).